Consider the following 140-residue polypeptide: Sex-regulated protein janus-B (140 aa).

Arginine 42 contributes to the substrate binding site. Histidine 69 (proton acceptor) is an active-site residue. 110 to 112 (SRT) serves as a coordination point for substrate.

The protein belongs to the janus family.

JanA and janB regulate somatic sex differentiation. This Drosophila yakuba (Fruit fly) protein is Sex-regulated protein janus-B (janB).